The primary structure comprises 142 residues: Large ribosomal subunit protein uL13 (142 aa).

It belongs to the universal ribosomal protein uL13 family. Part of the 50S ribosomal subunit.

Functionally, this protein is one of the early assembly proteins of the 50S ribosomal subunit, although it is not seen to bind rRNA by itself. It is important during the early stages of 50S assembly. This is Large ribosomal subunit protein uL13 from Aeromonas hydrophila subsp. hydrophila (strain ATCC 7966 / DSM 30187 / BCRC 13018 / CCUG 14551 / JCM 1027 / KCTC 2358 / NCIMB 9240 / NCTC 8049).